An 881-amino-acid polypeptide reads, in one-letter code: Mechanosensitive ion channel protein 4 (881 aa).

The segment at 35-245 (FWHNDKSSKP…EEEDPFSEED (211 aa)) is disordered. A compositionally biased stretch (basic and acidic residues) spans 56-66 (FMRRSSEKSEE). Composition is skewed to polar residues over residues 73–82 (LINQFLNKQK), 100–118 (QKNT…SASP), and 206–230 (TPRS…NQGG). Residues 234-245 (LEEEEDPFSEED) show a composition bias toward acidic residues. Helical transmembrane passes span 255–275 (ICVW…SLIC), 297–317 (VMVL…KLFV), 339–359 (KPVQ…FLFD), and 377–397 (VLIC…LVKV). The tract at residues 457-501 (GPKAVSSPPQVTVGSGRLQKSPSRVGKSPVLSRSGSKKEGGEEGI) is disordered. Over residues 463–478 (SPPQVTVGSGRLQKSP) the composition is skewed to polar residues. The span at 492-501 (SKKEGGEEGI) shows a compositional bias: basic and acidic residues. 2 helical membrane-spanning segments follow: residues 643 to 663 (IVDV…LGIA) and 678 to 698 (VVFV…FVFV).

Belongs to the MscS (TC 1.A.23) family.

It localises to the membrane. In terms of biological role, mechanosensitive channel that opens in response to stretch forces in the membrane lipid bilayer. The polypeptide is Mechanosensitive ion channel protein 4 (MSL4) (Arabidopsis thaliana (Mouse-ear cress)).